A 354-amino-acid polypeptide reads, in one-letter code: tRNA-specific 2-thiouridylase MnmA (354 aa).

ATP contacts are provided by residues 6-13 and Leu33; that span reads LLSGGVDS. The active-site Nucleophile is Cys100. The cysteines at positions 100 and 195 are disulfide-linked. Gly123 is a binding site for ATP. The segment at 145-147 is interaction with tRNA; sequence KDQ. Residue Cys195 is the Cysteine persulfide intermediate of the active site.

The protein belongs to the MnmA/TRMU family.

It localises to the cytoplasm. It catalyses the reaction S-sulfanyl-L-cysteinyl-[protein] + uridine(34) in tRNA + AH2 + ATP = 2-thiouridine(34) in tRNA + L-cysteinyl-[protein] + A + AMP + diphosphate + H(+). In terms of biological role, catalyzes the 2-thiolation of uridine at the wobble position (U34) of tRNA, leading to the formation of s(2)U34. This is tRNA-specific 2-thiouridylase MnmA from Borrelia duttonii (strain Ly).